The chain runs to 253 residues: Phosphoadenosine 5'-phosphosulfate reductase (253 aa).

Cys239 functions as the Nucleophile; cysteine thiosulfonate intermediate in the catalytic mechanism.

This sequence belongs to the PAPS reductase family. CysH subfamily.

The protein localises to the cytoplasm. The enzyme catalyses [thioredoxin]-disulfide + sulfite + adenosine 3',5'-bisphosphate + 2 H(+) = [thioredoxin]-dithiol + 3'-phosphoadenylyl sulfate. The protein operates within sulfur metabolism; hydrogen sulfide biosynthesis; sulfite from sulfate: step 3/3. Catalyzes the formation of sulfite from phosphoadenosine 5'-phosphosulfate (PAPS) using thioredoxin as an electron donor. This is Phosphoadenosine 5'-phosphosulfate reductase from Aliivibrio salmonicida (strain LFI1238) (Vibrio salmonicida (strain LFI1238)).